The following is a 213-amino-acid chain: GTP cyclohydrolase 1 (213 aa).

Residues cysteine 104, histidine 107, and cysteine 175 each coordinate Zn(2+).

It belongs to the GTP cyclohydrolase I family. In terms of assembly, toroid-shaped homodecamer, composed of two pentamers of five dimers.

The enzyme catalyses GTP + H2O = 7,8-dihydroneopterin 3'-triphosphate + formate + H(+). It participates in cofactor biosynthesis; 7,8-dihydroneopterin triphosphate biosynthesis; 7,8-dihydroneopterin triphosphate from GTP: step 1/1. This chain is GTP cyclohydrolase 1, found in Brucella anthropi (strain ATCC 49188 / DSM 6882 / CCUG 24695 / JCM 21032 / LMG 3331 / NBRC 15819 / NCTC 12168 / Alc 37) (Ochrobactrum anthropi).